Here is a 62-residue protein sequence, read N- to C-terminus: MTIIFQFALISLVLVSFVLVVGVPVAYATPQSWVESKKLLWLGSGVWIALVLLVGLLNFFVV.

Transmembrane regions (helical) follow at residues 8 to 28 and 41 to 61; these read ALIS…VAYA and WLGS…NFFV.

It belongs to the PsbZ family. In terms of assembly, PSII is composed of 1 copy each of membrane proteins PsbA, PsbB, PsbC, PsbD, PsbE, PsbF, PsbH, PsbI, PsbJ, PsbK, PsbL, PsbM, PsbT, PsbX, PsbY, PsbZ, Psb30/Ycf12, peripheral proteins PsbO, CyanoQ (PsbQ), PsbU, PsbV and a large number of cofactors. It forms dimeric complexes.

The protein resides in the cellular thylakoid membrane. Its function is as follows. May control the interaction of photosystem II (PSII) cores with the light-harvesting antenna, regulates electron flow through the 2 photosystem reaction centers. PSII is a light-driven water plastoquinone oxidoreductase, using light energy to abstract electrons from H(2)O, generating a proton gradient subsequently used for ATP formation. This Trichormus variabilis (strain ATCC 29413 / PCC 7937) (Anabaena variabilis) protein is Photosystem II reaction center protein Z.